The following is a 367-amino-acid chain: MVSEMTPTRRALAAVLGGRVDYVPPANPLAQTTTELMAICNASWPKAHFDSKMMADLAAASYEVCGIEAARPQFDISLEAEVLGCKLDWDKPDRPPVTGPAYTNPEDVTWPDKLEETGRIPVVLGAIDELRKRYDGMLPIIPLLTAPFTVAGHIAGVENMARWTKTDPEKAHAFIDAATDFVVAYGKLQAAYGAHILFLADPSASSSLISAETYREFVLPAHRRLAKEISCPQILHICGDSSKLLPYIKQSGIDCFSFDTVPVWYCRQVIGNDMSILGSLDVIDLMPNGTPEQVYNRTRECILQGTDIVGTACGVSYGTPLENLRAYVRACKETPIPRYDDVEDLIRQIGVGIGRNMKENVLGGMQE.

Positions 236, 238, and 313 each coordinate Zn(2+).

This sequence belongs to the uroporphyrinogen decarboxylase family. As to quaternary structure, homodimer. It depends on Zn(2+) as a cofactor.

The catalysed reaction is methanethiol + coenzyme M = methyl-coenzyme M + hydrogen sulfide + H(+). Methyltransferase involved in methanogenesis from methylated-thiols. Catalyzes two successive steps: mediates the transfer of a methyl group from the substrate to the cobalt cofactor of a methylated-thiol-specific corrinoid protein (MtsB), and the subsequent transfer of the methyl group from the corrinoid protein to coenzyme M. The chain is Methylated-thiol--coenzyme M methyltransferase (mtsA) from Methanosarcina mazei (strain ATCC BAA-159 / DSM 3647 / Goe1 / Go1 / JCM 11833 / OCM 88) (Methanosarcina frisia).